We begin with the raw amino-acid sequence, 174 residues long: RNA pyrophosphohydrolase (174 aa).

The Nudix hydrolase domain occupies 6 to 149 (GFRANVGIII…KRDVYRKVMK (144 aa)). The Nudix box motif lies at 38–59 (GGVDDGESAEEAMYRELYEEVG).

Belongs to the Nudix hydrolase family. RppH subfamily. A divalent metal cation serves as cofactor.

Its function is as follows. Accelerates the degradation of transcripts by removing pyrophosphate from the 5'-end of triphosphorylated RNA, leading to a more labile monophosphorylated state that can stimulate subsequent ribonuclease cleavage. The sequence is that of RNA pyrophosphohydrolase from Shewanella sp. (strain W3-18-1).